The primary structure comprises 504 residues: L-carnitine/gamma-butyrobetaine antiporter (504 aa).

12 consecutive transmembrane segments (helical) span residues 10–30 (IEPKVFFPPLIIVGILCWLTV), 51–71 (WGWAFEWYMVVMLFGWFWLVF), 92–112 (IFMMFASCTSAAVLFWGSIEI), 143–163 (GPLPWATYSFLSVAFAYFFFV), 195–215 (FYLVALIFAMGTSLGLATPLV), 231–251 (LDAIIITCWIILNTICVACGL), 263–283 (SYLSFLMLGWVFIVSGASFIM), 316–336 (WTVFYWAWWVIYAIQMSIFLA), 347–367 (LCFGMVLGLTASTWILWTVLG), 398–418 (WAALPLSTATMWGFFILCFIA), 446–466 (LLVRIGWSVLVGIIGIVLLAL), and 475–495 (AIIAGGCPLFFVNIMVTLSFI).

Belongs to the BCCT transporter (TC 2.A.15) family. CaiT subfamily. As to quaternary structure, homotrimer.

The protein resides in the cell inner membrane. It carries out the reaction 4-(trimethylamino)butanoate(in) + (R)-carnitine(out) = 4-(trimethylamino)butanoate(out) + (R)-carnitine(in). It functions in the pathway amine and polyamine metabolism; carnitine metabolism. In terms of biological role, catalyzes the exchange of L-carnitine for gamma-butyrobetaine. This is L-carnitine/gamma-butyrobetaine antiporter from Escherichia coli O81 (strain ED1a).